Consider the following 229-residue polypeptide: Uracil-DNA glycosylase (229 aa).

Asp-72 (proton acceptor) is an active-site residue.

Belongs to the uracil-DNA glycosylase (UDG) superfamily. UNG family.

It localises to the cytoplasm. It carries out the reaction Hydrolyzes single-stranded DNA or mismatched double-stranded DNA and polynucleotides, releasing free uracil.. In terms of biological role, excises uracil residues from the DNA which can arise as a result of misincorporation of dUMP residues by DNA polymerase or due to deamination of cytosine. This chain is Uracil-DNA glycosylase, found in Dichelobacter nodosus (strain VCS1703A).